A 976-amino-acid chain; its full sequence is DNA-directed RNA polymerase 1, mitochondrial (976 aa).

The transit peptide at methionine 1–serine 42 directs the protein to the mitochondrion. Residues aspartate 677, lysine 752, and aspartate 909 contribute to the active site.

Belongs to the phage and mitochondrial RNA polymerase family.

The protein localises to the mitochondrion. The catalysed reaction is RNA(n) + a ribonucleoside 5'-triphosphate = RNA(n+1) + diphosphate. Its function is as follows. DNA-dependent RNA polymerase catalyzes the transcription of DNA into RNA using the four ribonucleoside triphosphates as substrates. In Arabidopsis thaliana (Mouse-ear cress), this protein is DNA-directed RNA polymerase 1, mitochondrial (RPOT1).